The following is an 879-amino-acid chain: Probable phospholipid transport protein YdbH (879 aa).

Topologically, residues 1–6 are cytoplasmic; the sequence is MLGKYK. The chain crosses the membrane as a helical span at residues 7-29; the sequence is AVLALLLLIILVPLTLLMTLGLW. The Periplasmic segment spans residues 30–879; the sequence is VPTLAGIWLP…PQGKECEEKQ (850 aa).

As to quaternary structure, interacts with the outer membrane lipoprotein YnbE.

The protein localises to the cell inner membrane. Functionally, involved in outer membrane lipid homeostasis. Interacts with the outer membrane lipoprotein YnbE to form a functional protein bridge connecting the inner and outer membranes of the cell. Likely transports phospholipids between the inner membrane and the outer membrane. It would provide a bridge-like structure that protects phospholipids as they travel across the periplasm. TamB, YdbH and YhdP are redundant, but not equivalent, in performing an essential function for growth and maintaining lipid homeostasis in the outer membrane. Any of these three proteins is sufficient for growth. The sequence is that of Probable phospholipid transport protein YdbH (ydbH) from Escherichia coli (strain K12).